Consider the following 156-residue polypeptide: Small ribosomal subunit protein uS7 (156 aa).

The protein belongs to the universal ribosomal protein uS7 family. Part of the 30S ribosomal subunit. Contacts proteins S9 and S11.

One of the primary rRNA binding proteins, it binds directly to 16S rRNA where it nucleates assembly of the head domain of the 30S subunit. Is located at the subunit interface close to the decoding center, probably blocks exit of the E-site tRNA. The protein is Small ribosomal subunit protein uS7 of Enterobacter sp. (strain 638).